We begin with the raw amino-acid sequence, 511 residues long: Bifunctional purine biosynthesis protein PurH (511 aa).

Residues 1-146 (MTKRALVSVS…KNHADVTVVV (146 aa)) form the MGS-like domain.

Belongs to the PurH family.

The enzyme catalyses (6R)-10-formyltetrahydrofolate + 5-amino-1-(5-phospho-beta-D-ribosyl)imidazole-4-carboxamide = 5-formamido-1-(5-phospho-D-ribosyl)imidazole-4-carboxamide + (6S)-5,6,7,8-tetrahydrofolate. It carries out the reaction IMP + H2O = 5-formamido-1-(5-phospho-D-ribosyl)imidazole-4-carboxamide. The protein operates within purine metabolism; IMP biosynthesis via de novo pathway; 5-formamido-1-(5-phospho-D-ribosyl)imidazole-4-carboxamide from 5-amino-1-(5-phospho-D-ribosyl)imidazole-4-carboxamide (10-formyl THF route): step 1/1. It functions in the pathway purine metabolism; IMP biosynthesis via de novo pathway; IMP from 5-formamido-1-(5-phospho-D-ribosyl)imidazole-4-carboxamide: step 1/1. The sequence is that of Bifunctional purine biosynthesis protein PurH from Shouchella clausii (strain KSM-K16) (Alkalihalobacillus clausii).